A 202-amino-acid polypeptide reads, in one-letter code: GTP cyclohydrolase 1 (202 aa).

Zn(2+) is bound by residues cysteine 93, histidine 96, and cysteine 164.

Belongs to the GTP cyclohydrolase I family. In terms of assembly, toroid-shaped homodecamer, composed of two pentamers of five dimers.

It carries out the reaction GTP + H2O = 7,8-dihydroneopterin 3'-triphosphate + formate + H(+). The protein operates within cofactor biosynthesis; 7,8-dihydroneopterin triphosphate biosynthesis; 7,8-dihydroneopterin triphosphate from GTP: step 1/1. The sequence is that of GTP cyclohydrolase 1 from Pelagibacter ubique (strain HTCC1062).